Consider the following 514-residue polypeptide: Retron Vc95 probable ATPase (514 aa).

The ATP-binding motif lies at 92-99; it reads GNNGSGKS.

Its function is as follows. Probable ATPase component of antiviral defense system retron Vc95, composed of a non-coding RNA (ncRNA), a reverse transcriptase (RT), this protein and a putative HNH endonuclease. Expression of retron Vc95 confers protection against bacteriophages T2, T4 and T6. At multiplicity of infection (MOI) of 0.02 cultures slow growth when infected with T4 but do not collapse, at MOI 2 cultures enter growth stasis. This is Retron Vc95 probable ATPase from Vibrio cholerae serotype O1 biovar El Tor.